A 421-amino-acid polypeptide reads, in one-letter code: MSKTHLTEQKFSDFALHPKVVEALEKKGFHNCTPIQALALPLTLAGRDVAGQAQTGTGKTMAFLTSTFHYLLSHPAIADRKVNQPRALIMAPTRELAVQIHADAEPLAEATGLKLGLAYGGDGYDKQLKVLESGVDILIGTTGRLIDYAKQNHINLGAIQVVVLDEADRMYDLGFIKDIRWLFRRMPPANQRLNMLFSATLSYRVRELAFEQMNNAEYIEVEPEQKTGHRIKEELFYPSNEEKMRLLQTLIEEEWPDRAIIFANTKHRCEEIWGHLAADGHRVGLLTGDVAQKKRLRILDEFTRGDLDILVATDVAARGLHIPAVTHVFNYDLPDDCEDYVHRIGRTGRAGASGHSISLACEEYALNLPAIETYIGHSIPVSKYNPDALMTDLPKPLRLTRPRTGNGPRRTGAPRNRRRSG.

Residues 9–37 (QKFSDFALHPKVVEALEKKGFHNCTPIQA) carry the Q motif motif. The region spanning 40-219 (LPLTLAGRDV…FEQMNNAEYI (180 aa)) is the Helicase ATP-binding domain. Residue 53–60 (AQTGTGKT) participates in ATP binding. Residues 165 to 168 (DEAD) carry the DEAD box motif. A Helicase C-terminal domain is found at 245–390 (RLLQTLIEEE…VSKYNPDALM (146 aa)). Residues 392-421 (DLPKPLRLTRPRTGNGPRRTGAPRNRRRSG) are disordered. The span at 402–414 (PRTGNGPRRTGAP) shows a compositional bias: low complexity.

This sequence belongs to the DEAD box helicase family. RhlB subfamily. Component of the RNA degradosome, which is a multiprotein complex involved in RNA processing and mRNA degradation.

The protein localises to the cytoplasm. The catalysed reaction is ATP + H2O = ADP + phosphate + H(+). Functionally, DEAD-box RNA helicase involved in RNA degradation. Has RNA-dependent ATPase activity and unwinds double-stranded RNA. In Escherichia coli O139:H28 (strain E24377A / ETEC), this protein is ATP-dependent RNA helicase RhlB.